The primary structure comprises 82 residues: Large ribosomal subunit protein uL23 (82 aa).

It belongs to the universal ribosomal protein uL23 family. Part of the 50S ribosomal subunit. Contacts protein L29.

In terms of biological role, binds to 23S rRNA. One of the proteins that surrounds the polypeptide exit tunnel on the outside of the ribosome. This Methanococcoides burtonii (strain DSM 6242 / NBRC 107633 / OCM 468 / ACE-M) protein is Large ribosomal subunit protein uL23.